Consider the following 299-residue polypeptide: Protein phosphatase 1 regulatory subunit 3D (299 aa).

The disordered stretch occupies residues 1–22; that stretch reads MSRGPSSAVLPSALGSRKLGPR. Phosphoserine is present on residues Ser-23, Ser-25, and Ser-28. A disordered region spans residues 37–94; it reads EPRACRPPGSPGRAPPPTPAPSGCDPRLRPIILRRARSLPSSPERRQKAAGAPGAACR. Over residues 44-56 the composition is skewed to pro residues; that stretch reads PGSPGRAPPPTPA. Residues 57–67 show a composition bias toward low complexity; the sequence is PSGCDPRLRPI. At Ser-74 the chain carries Phosphoserine. Residues 85 to 94 are compositionally biased toward low complexity; that stretch reads AAGAPGAACR. The short motif at 101-104 is the PP1-binding motif element; it reads LRVR. Ser-133 carries the phosphoserine modification. One can recognise a CBM21 domain in the interval 169–278; sequence GERLQRQLVC…NNDHRDYSLT (110 aa).

In terms of assembly, interacts with PPP1CC catalytic subunit of PP1, and associates with glycogen. Interacts with EPM2A; in the presence of NHLC1/malin the interaction leads to PPP1R3D ubiquitination and autophagic degradation. As to expression, expressed in all tissues tested. High expression in skeletal muscle and heart.

Its function is as follows. Seems to act as a glycogen-targeting subunit for PP1. PP1 is essential for cell division, and participates in the regulation of glycogen metabolism, muscle contractility and protein synthesis. This chain is Protein phosphatase 1 regulatory subunit 3D (PPP1R3D), found in Homo sapiens (Human).